The primary structure comprises 130 residues: MTRSSVLADALNAINNAEKTGKRQVLIRPSSKVIIKFLQVMQKHGYIGEFEYIDDHRSGKIVVQLNGRLNKCGVISPRFNVKIGDIEKWTANLLPARQFGYVILTTSAGIMDHEEARRKHVSGKILGFVY.

Belongs to the universal ribosomal protein uS8 family. Component of the small ribosomal subunit (SSU). Mature yeast ribosomes consist of a small (40S) and a large (60S) subunit. The 40S small subunit contains 1 molecule of ribosomal RNA (18S rRNA) and 33 different proteins (encoded by 57 genes). The large 60S subunit contains 3 rRNA molecules (25S, 5.8S and 5S rRNA) and 46 different proteins (encoded by 81 genes).

It is found in the cytoplasm. Component of the ribosome, a large ribonucleoprotein complex responsible for the synthesis of proteins in the cell. The small ribosomal subunit (SSU) binds messenger RNAs (mRNAs) and translates the encoded message by selecting cognate aminoacyl-transfer RNA (tRNA) molecules. The large subunit (LSU) contains the ribosomal catalytic site termed the peptidyl transferase center (PTC), which catalyzes the formation of peptide bonds, thereby polymerizing the amino acids delivered by tRNAs into a polypeptide chain. The nascent polypeptides leave the ribosome through a tunnel in the LSU and interact with protein factors that function in enzymatic processing, targeting, and the membrane insertion of nascent chains at the exit of the ribosomal tunnel. This chain is Small ribosomal subunit protein uS8A, found in Saccharomyces cerevisiae (strain ATCC 204508 / S288c) (Baker's yeast).